Consider the following 341-residue polypeptide: MITTPRYIVIEENGINLLNDILLKLNLKNPLVITGKRTKKYISNFDYFYYFDYIDIKRNEPNKEFIENICNFDCIIGVGGGKAIDVGKYIAYKYNKQFISIPTTASNDGIASPIISQQGKSITAESPIAIIADLNIIKKSPKRLLSAGMGDIVSNITAVLDWKLSYKETKEPYSESSAIFSKTIAMELVEFVLSNDKNNLEEYPKKLVKALIGSGITISIAGSTRPASGSEHLFSHSLDIITKKLNLNINGIHGEQCGIGTIISAYLHLIEGNITIGEYENIKLSLEKVGAPTIGEQLGYDKNILIDALANAHKIRNRWTILRNGISKEKAEKILKKTDII.

Residues 81 to 85 (GKAID) and 103 to 106 (TTAS) each bind NAD(+). Residue aspartate 108 coordinates substrate. Position 112 (serine 112) interacts with NAD(+). Aspartate 151 is a substrate binding site. Positions 151 and 232 each coordinate Zn(2+). Histidine 236 lines the substrate pocket. A Zn(2+)-binding site is contributed by histidine 253.

It belongs to the glycerol-1-phosphate dehydrogenase family. Requires Zn(2+) as cofactor.

Its subcellular location is the cytoplasm. It catalyses the reaction sn-glycerol 1-phosphate + NAD(+) = dihydroxyacetone phosphate + NADH + H(+). The enzyme catalyses sn-glycerol 1-phosphate + NADP(+) = dihydroxyacetone phosphate + NADPH + H(+). It functions in the pathway membrane lipid metabolism; glycerophospholipid metabolism. Catalyzes the NAD(P)H-dependent reduction of dihydroxyacetonephosphate (DHAP or glycerone phosphate) to glycerol 1-phosphate (G1P). The G1P thus generated is used as the glycerophosphate backbone of phospholipids in the cellular membranes of Archaea. This Methanococcus aeolicus (strain ATCC BAA-1280 / DSM 17508 / OCM 812 / Nankai-3) protein is Glycerol-1-phosphate dehydrogenase [NAD(P)+].